We begin with the raw amino-acid sequence, 346 residues long: Phosphate acyltransferase (346 aa).

This sequence belongs to the PlsX family. As to quaternary structure, homodimer. Probably interacts with PlsY.

It is found in the cytoplasm. The catalysed reaction is a fatty acyl-[ACP] + phosphate = an acyl phosphate + holo-[ACP]. The protein operates within lipid metabolism; phospholipid metabolism. Its function is as follows. Catalyzes the reversible formation of acyl-phosphate (acyl-PO(4)) from acyl-[acyl-carrier-protein] (acyl-ACP). This enzyme utilizes acyl-ACP as fatty acyl donor, but not acyl-CoA. This Geotalea uraniireducens (strain Rf4) (Geobacter uraniireducens) protein is Phosphate acyltransferase.